Consider the following 173-residue polypeptide: Trafficking regulator of GLUT4 1 (173 aa).

Pro residues predominate over residues 1–10 (MANPAQPPLQ). The disordered stretch occupies residues 1–20 (MANPAQPPLQDPGSTSPLEL). At 1–102 (MANPAQPPLQ…QDQEAPKDYL (102 aa)) the chain is on the cytoplasmic side. 6 positions are modified to phosphoserine: Ser16, Ser43, Ser45, Ser70, Ser84, and Ser85. An intramembrane region (helical) is located at residues 103–123 (VLAIASCFCPVWPLNLIPLIF). Over 124–150 (SIMSRSSVQQGDLDGARRLGRLARLLS) the chain is Cytoplasmic. A helical membrane pass occupies residues 151–171 (ITFIILGIVIIIVAVTVNFTV). Residues 172 to 173 (PK) lie on the Extracellular side of the membrane.

Belongs to the CD225/Dispanin family. As to quaternary structure, interacts with SLC2A4; the interaction is required for proper SLC2A4 reacycling after insulin stimulation. Expressed specifically in white and brown adipose tissues.

The protein localises to the cell membrane. Its subcellular location is the endomembrane system. It localises to the cytoplasm. It is found in the perinuclear region. In terms of biological role, regulates insulin-mediated adipose tissue glucose uptake and transport by modulation of SLC2A4 recycling. Not required for SLC2A4 membrane fusion upon an initial stimulus, but rather is necessary for proper protein recycling during prolonged insulin stimulation. In Mus musculus (Mouse), this protein is Trafficking regulator of GLUT4 1 (Trarg1).